The primary structure comprises 89 residues: Small ribosomal subunit protein uS15 (89 aa).

The tract at residues 1–24 (MSLDTTEKQQLINSHQTHATDTGS) is disordered. Over residues 8-24 (KQQLINSHQTHATDTGS) the composition is skewed to polar residues.

The protein belongs to the universal ribosomal protein uS15 family. Part of the 30S ribosomal subunit. Forms a bridge to the 50S subunit in the 70S ribosome, contacting the 23S rRNA.

In terms of biological role, one of the primary rRNA binding proteins, it binds directly to 16S rRNA where it helps nucleate assembly of the platform of the 30S subunit by binding and bridging several RNA helices of the 16S rRNA. Its function is as follows. Forms an intersubunit bridge (bridge B4) with the 23S rRNA of the 50S subunit in the ribosome. The sequence is that of Small ribosomal subunit protein uS15 from Synechococcus sp. (strain CC9311).